Consider the following 2319-residue polypeptide: Neurogenic locus notch homolog protein 3 (2319 aa).

Residues 1–14 (MGPGARGRRRRRRL) are compositionally biased toward basic residues. Residues 1-20 (MGPGARGRRRRRRLMALPPP) form a disordered region. An N-terminal signal peptide occupies residues 1 to 40 (MGPGARGRRRRRRLMALPPPPPPMRALPLLLLLLAGLGAA). 3 consecutive EGF-like domains span residues 41–79 (APPC…ERCQ), 80–120 (LEDP…PDCS), and 121–158 (LPDP…RNCR). Topologically, residues 41 to 1645 (APPCLDGSPC…LEPPEQSVPL (1605 aa)) are extracellular. Disulfide bonds link C44–C56, C50–C67, C69–C78, C84–C95, C89–C108, C110–C119, C125–C136, C130–C146, C148–C157, C164–C176, C170–C185, C187–C196, C203–C214, C208–C224, C226–C235, C242–C253, C247–C262, C264–C273, C280–C293, C287–C302, C304–C313, C320–C331, C325–C340, C342–C351, C357–C368, C362–C379, C381–C390, C397–C410, C404–C419, C421–C430, C437–C448, C442–C457, C459–C468, C475–C486, C480–C495, C497–C506, C513–C524, C518–C533, C535–C544, C551–C561, C556–C570, C572–C581, C588–C599, C593–C608, C610–C619, C626–C636, C631–C645, C647–C656, C663–C674, C668–C683, C685–C694, C701–C711, C706–C720, C722–C731, C740–C751, C745–C760, C762–C771, C777–C788, C782–C798, C800–C809, C816–C828, C822–C837, C839–C848, C855–C866, C860–C875, C877–C886, C893–C903, C898–C912, C914–C923, C930–C941, C935–C950, C952–C961, C968–C979, C973–C988, C990–C999, C1006–C1017, C1011–C1024, C1026–C1035, C1042–C1063, C1057–C1072, C1074–C1083, C1090–C1101, C1095–C1110, C1112–C1121, C1128–C1139, C1133–C1148, C1150–C1159, C1166–C1184, C1178–C1193, C1195–C1204, C1211–C1224, C1216–C1234, C1236–C1245, C1252–C1263, C1257–C1277, C1279–C1288, C1295–C1306, C1300–C1315, and C1317–C1326. In terms of domain architecture, EGF-like 4; calcium-binding spans 160–197 (DIDECRAGASCRHGGTCINTPGSFHCLCPLGYTGLLCE). Positions 199–236 (PIVPCAPSPCRNGGTCRQSSDVTYDCACLPGFEGQNCE) constitute an EGF-like 5 domain. Residues 238-274 (NVDDCPGHRCLNGGTCVDGVNTYNCQCPPEWTGQFCT) form the EGF-like 6; calcium-binding domain. The EGF-like 7 domain occupies 276-314 (DVDECQLQPNACHNGGTCFNLLGGHSCVCVNGWTGESCS). Positions 316 to 352 (NIDDCATAVCFHGATCHDRVASFYCACPMGKTGLLCH) constitute an EGF-like 8; calcium-binding domain. The region spanning 353–391 (LDDACVSNPCHEDAICDTNPVSGRAICTCPPGFTGGACD) is the EGF-like 9 domain. The EGF-like 10; calcium-binding domain occupies 393 to 431 (DVDECSIGANPCEHLGRCVNTQGSFLCQCGRGYTGPRCE). The EGF-like 11; calcium-binding domain occupies 433–469 (DVNECLSGPCRNQATCLDRIGQFTCICMAGFTGTFCE). An EGF-like 12; calcium-binding domain is found at 471-507 (DIDECQSSPCVNGGVCKDRVNGFSCTCPSGFSGSTCQ). The EGF-like 13; calcium-binding domain occupies 509 to 545 (DVDECASTPCRNGAKCVDQPDGYECRCAEGFEGTLCE). The EGF-like 14; calcium-binding domain occupies 547-582 (NVDDCSPDPCHHGRCVDGIASFSCACAPGYTGIRCE). The region spanning 584–620 (QVDECRSQPCRYGGKCLDLVDKYLCRCPPGTTGVNCE) is the EGF-like 15; calcium-binding domain. The EGF-like 16; calcium-binding domain occupies 622-657 (NIDDCASNPCTFGVCRDGINRYDCVCQPGFTGPLCN). In terms of domain architecture, EGF-like 17; calcium-binding spans 659 to 695 (EINECASSPCGEGGSCVDGENGFHCLCPPGSLPPLCL). EGF-like domains lie at 697–732 (ANHP…PRCS), 736–772 (APDA…HQCE), and 773–810 (VLSP…PRCQ). The EGF-like 21; calcium-binding domain occupies 812–849 (DVDECAGASPCGPHGTCTNLPGSFRCICHGGYTGPFCD). In terms of domain architecture, EGF-like 22; calcium-binding spans 851–887 (DIDDCDPNPCLNGGSCQDGVGSFSCSCLSGFAGPRCA). The region spanning 889-924 (DVDECLSSPCGPGTCTDHVASFTCTCPPGYGGFHCE) is the EGF-like 23; calcium-binding domain. EGF-like domains are found at residues 926–962 (DLLD…THCQ), 964–1000 (KVDP…NQCQ), 1002–1036 (PVDW…PLCD), 1038–1084 (PSLP…SHCE), and 1086–1122 (EVDP…DSCE). The region spanning 1124–1160 (DVDECASQPCQNGGSCIDLVAHYLCSCPPGTLGVLCE) is the EGF-like 29; calcium-binding domain. Residues 1162 to 1205 (NEDDCGPGPSLDSGLRCLHNGTCVDLVGGFRCNCPPGYTGLHCE) enclose the EGF-like 30; calcium-binding domain. An N-linked (GlcNAc...) asparagine glycan is attached at N1181. EGF-like domains are found at residues 1207 to 1246 (DINE…PRCQ), 1248 to 1289 (ALFP…LRCE), 1291 to 1327 (VARS…PSCR), and 1337 to 1375 (TNTS…PRCE). The N-linked (GlcNAc...) asparagine glycan is linked to N1338. Cystine bridges form between C1341-C1352, C1346-C1363, C1365-C1374, C1389-C1412, C1394-C1407, C1403-C1419, C1430-C1453, C1435-C1448, C1444-C1460, C1469-C1495, C1477-C1490, and C1486-C1502. LNR repeat units follow at residues 1389-1429 (CPRA…PWRQ), 1430-1467 (CEAL…GRDR), and 1469-1507 (CNPV…SEVP). An N-linked (GlcNAc...) asparagine glycan is attached at N1440. A helical membrane pass occupies residues 1646–1666 (LPLLVAGAVFLLVIFVLGVMV). Topologically, residues 1667-2319 (ARRKREHSTL…EVTPKRQVMA (653 aa)) are cytoplasmic. 5 ANK repeats span residues 1840-1869 (TGET…DTNA), 1873-1903 (SGRT…DLDA), 1907-1936 (DGST…DVNA), 1940-1969 (LGKS…NKDM), and 1973-2002 (KEET…NREI). 2 disordered regions span residues 2026–2046 (LDQP…PLLC) and 2059–2129 (QSGT…EGPY). Positions 2029 to 2046 (PSGPRSPSGPHGLGPLLC) are enriched in low complexity. R2175 carries the post-translational modification Omega-N-methylarginine. Residues 2197–2319 (LNPATPVSPH…EVTPKRQVMA (123 aa)) are disordered. The segment covering 2263–2288 (SLSDWSDSTPSPATATSATAAGALPA) has biased composition (low complexity). The span at 2297–2306 (SLPQSQTQLG) shows a compositional bias: polar residues.

The protein belongs to the NOTCH family. Heterodimer of a C-terminal fragment N(TM) and a N-terminal fragment N(EC) which are probably linked by disulfide bonds. Interacts with MAML1, MAML2 and MAML3 which act as transcriptional coactivators for NOTCH3. Interacts with PSMA1. Interacts with HIF1AN. Post-translationally, synthesized in the endoplasmic reticulum as an inactive form which is proteolytically cleaved by a furin-like convertase in the trans-Golgi network before it reaches the plasma membrane to yield an active, ligand-accessible form. Cleavage results in a C-terminal fragment N(TM) and a N-terminal fragment N(EC). Following ligand binding, it is cleaved by TNF-alpha converting enzyme (TACE) to yield a membrane-associated intermediate fragment called notch extracellular truncation (NEXT). This fragment is then cleaved by presenilin dependent gamma-secretase to release a notch-derived peptide containing the intracellular domain (NICD) from the membrane. Phosphorylated. In terms of processing, hydroxylated by HIF1AN. As to expression, expressed in postnatal central nervous system (CNS) germinal zones and, in early postnatal life, within numerous cells throughout the CNS. It is more highly localized to ventricular germinal zones.

The protein resides in the cell membrane. The protein localises to the nucleus. Its function is as follows. Functions as a receptor for membrane-bound ligands Jagged1, Jagged2 and Delta1 to regulate cell-fate determination. Upon ligand activation through the released notch intracellular domain (NICD) it forms a transcriptional activator complex with RBPJ/RBPSUH and activates genes of the enhancer of split locus. Affects the implementation of differentiation, proliferation and apoptotic programs. Acts instructively to control the cell fate determination of CNS multipotent progenitor cells, resulting in astroglial induction and neuron/oligodendrocyte suppression. This Rattus norvegicus (Rat) protein is Neurogenic locus notch homolog protein 3 (Notch3).